A 2474-amino-acid polypeptide reads, in one-letter code: Highly reducing polyketide synthase 40 (2474 aa).

One can recognise a Ketosynthase family 3 (KS3) domain in the interval 1–294; the sequence is MFKETEIQQR…GSNAHIIIDD (294 aa). Active-site for beta-ketoacyl synthase activity residues include Cys42, His177, and His217. The Malonyl-CoA:ACP transacylase (MAT) domain maps to 459–798; sequence FVFTGQGAQW…GYESVLRRGT (340 aa). Residues 864-998 are N-terminal hotdog fold; that stretch reads HELLGAPVPD…GLVVTEYEQP (135 aa). Residues 864–1182 enclose the PKS/mFAS DH domain; that stretch reads HELLGAPVPD…ITTVARSEGA (319 aa). The Proton acceptor; for dehydratase activity role is filled by His896. Positions 1027–1182 are C-terminal hotdog fold; the sequence is KVETSFRQLY…ITTVARSEGA (156 aa). The Proton donor; for dehydratase activity role is filled by Asp1093. The tract at residues 1232–1535 is methyltransferase (CMet) domain; sequence VEMMCFLYIK…DLHIYDFPDH (304 aa). An Enoyl reductase (ER) domain is found at 1770–2063; it reads GLLDSLQFQD…SGSHMGKLVL (294 aa). The Ketoreductase (KR) domain occupies 2087 to 2263; that stretch reads ASYLLSGGLG…PGVAVDLGMI (177 aa). In terms of domain architecture, Carrier spans 2385-2462; that stretch reads DAAKIVSAAI…ELAELAAKRS (78 aa). An O-(pantetheine 4'-phosphoryl)serine modification is found at Ser2422.

Requires pantetheine 4'-phosphate as cofactor.

It functions in the pathway secondary metabolite biosynthesis. In terms of biological role, highly reducing polyketide synthase; part of the gene cluster that mediates the biosynthesis of the gamma-pyrones fusapyrone (FPY) and deoxyfusapyrone (dFPY). FPY is an undecaketide and thus likely synthesized by the polyketide synthase FPY1 from acetyl-CoA functioning as starter unit and the addition of 10 malonyl-CoA extender units by successive Claisen-condensations. Next to this, FPY shares some rare features: C-glycosylated 4-deoxyglucose at C-3, a gem-dimethyl group at C-13, and an alpha-beta to beta-gamma double bond shift at C-20. During FPY biosynthesis mono-C-methyl groups are transferred to the tetra-, penta-, hexa- and heptaketide, while two C-methyl groups are transferred to the nonaketide, suggesting that the CMet domain is programmed to selectively catalyze two successive C-alpha-methylation reactions of the nonaketide, while other alpha-carbons are non- or mono-methylated only. While the origin of the 4'-deoxyglucose moiety remains opaque, its transfer to C-3 is most likely mediated by the C-glycosyltransferase FPY2. Next to this, the hydroxyl group present at C-33 and discriminating between FPY and dFPY, is likely to be installed by the cytochrome P450 monooxygenase FPY7. No putative function can be predicted for the remaining genes FPY3-FPY6. The sequence is that of Highly reducing polyketide synthase 40 from Fusarium mangiferae (Mango malformation disease fungus).